The sequence spans 616 residues: MALLQISEPGLSAAPHQRRLAAGIDLGTTNSLVATVRSGQAETLADEQGHHLLPSVVRYQAGGHIVGAEAREQAADDPLNTVSSIKRMMGRSLADVQARYPHLPYQMHASESGMPQLATAAGSVNPIQVSADILAALSARAQAALGGELDGVVITVPAYFDDAQRQGTKDAARLAGLHVLRLLNEPTAAAIAYGLDSAQEGVIAVYDLGGGTFDISILRLSRGVFEVLATGGDSALGGDDFDHLLADWLREQAGLRDRSDAGLARRFLDAAVAAKIALSTQQETTVCVGDWQGEVSRDQLDALIAPLVKRTLLACHRTLKDAGVTRDEVLEVVMVGGSTRVPLVRTQVGDFFGRQPLTTIDPDRVVAIGAAIQADILVGNKPDADMLLLDVIPLSLGLETMGGLVEKVIPRNTTIPVARAQEFTTFKDGQTAMMIHVLQGERELVQDNRSLARFTLRGIPPLSAGGAHIRVTFQVDADGLLSVTAMEKSTGVQAAIQVKPSYGLSEDEIVGMLKDSMANAEGDLSARMLAEQKVEAARVLESLHGALQQDSALLGEQELAAIRQAQTALQAAADGDETSAIEAAIKVLDAQTQEFAARRMDSSIRRALAGHSVDEV.

This sequence belongs to the heat shock protein 70 family.

Its function is as follows. Chaperone involved in the maturation of iron-sulfur cluster-containing proteins. Has a low intrinsic ATPase activity which is markedly stimulated by HscB. Involved in the maturation of IscU. This is Chaperone protein HscA from Edwardsiella ictaluri (strain 93-146).